The chain runs to 510 residues: 2,3-bisphosphoglycerate-independent phosphoglycerate mutase (510 aa).

Mn(2+) contacts are provided by Asp-13 and Ser-63. Ser-63 acts as the Phosphoserine intermediate in catalysis. Substrate contacts are provided by residues His-124, 154–155 (RD), Arg-186, Arg-192, 262–265 (RADR), and Lys-334. Residues Asp-401, His-405, Asp-442, His-443, and His-461 each contribute to the Mn(2+) site.

This sequence belongs to the BPG-independent phosphoglycerate mutase family. Monomer. Mn(2+) is required as a cofactor.

It carries out the reaction (2R)-2-phosphoglycerate = (2R)-3-phosphoglycerate. It participates in carbohydrate degradation; glycolysis; pyruvate from D-glyceraldehyde 3-phosphate: step 3/5. Catalyzes the interconversion of 2-phosphoglycerate and 3-phosphoglycerate. The protein is 2,3-bisphosphoglycerate-independent phosphoglycerate mutase of Vibrio parahaemolyticus serotype O3:K6 (strain RIMD 2210633).